We begin with the raw amino-acid sequence, 615 residues long: RNA polymerase sigma factor RpoD (615 aa).

Residues 177–215 (APTATHVGSELSQEDLDDDEDEDEEDGDDDAADDDNSID) form a disordered region. The segment covering 188-214 (SQEDLDDDEDEDEEDGDDDAADDDNSI) has biased composition (acidic residues). Positions 381–451 (MVEANLRLVI…TRSIADQART (71 aa)) are sigma-70 factor domain-2. The short motif at 405 to 408 (DLIQ) is the Interaction with polymerase core subunit RpoC element. The segment at 460–536 (ETINKLNRIS…DTTLELPLDS (77 aa)) is sigma-70 factor domain-3. The interval 549–602 (VLAGLTAREAKVLRMRFGIDMNTDHTLEEVGKQFDVTRERIRQIEAKALRKLRH) is sigma-70 factor domain-4. Residues 575–594 (LEEVGKQFDVTRERIRQIEA) constitute a DNA-binding region (H-T-H motif).

It belongs to the sigma-70 factor family. RpoD/SigA subfamily. As to quaternary structure, interacts transiently with the RNA polymerase catalytic core.

Its subcellular location is the cytoplasm. In terms of biological role, sigma factors are initiation factors that promote the attachment of RNA polymerase to specific initiation sites and are then released. This sigma factor is the primary sigma factor during exponential growth. The polypeptide is RNA polymerase sigma factor RpoD (Salmonella typhi).